The chain runs to 57 residues: Protein translocase subunit SecE (57 aa).

A helical transmembrane segment spans residues 34–54; the sequence is AGILLIGAIGFLVFLIMGGIV.

The protein belongs to the SecE/SEC61-gamma family. As to quaternary structure, component of the Sec protein translocase complex. Heterotrimer consisting of SecY (alpha), SecG (beta) and SecE (gamma) subunits. The heterotrimers can form oligomers, although 1 heterotrimer is thought to be able to translocate proteins. Interacts with the ribosome. May interact with SecDF, and other proteins may be involved.

It is found in the cell membrane. Essential subunit of the Sec protein translocation channel SecYEG. Clamps together the 2 halves of SecY. May contact the channel plug during translocation. The polypeptide is Protein translocase subunit SecE (Halobacterium salinarum (strain ATCC 29341 / DSM 671 / R1)).